Consider the following 130-residue polypeptide: Small ribosomal subunit protein uS8 (130 aa).

Belongs to the universal ribosomal protein uS8 family. Part of the 30S ribosomal subunit. Contacts proteins S5 and S12.

Functionally, one of the primary rRNA binding proteins, it binds directly to 16S rRNA central domain where it helps coordinate assembly of the platform of the 30S subunit. This is Small ribosomal subunit protein uS8 from Shewanella sp. (strain MR-7).